A 159-amino-acid polypeptide reads, in one-letter code: MFLRQEDFATVVRSTPLVSLDFIVENSRGEFLLGKRTNRPAQGYWFVPGGRVQKDETLEAAFERLTMAELGLRLPITAGQFYGVWQHFYDDNFSGTDFTTHYVVLGFRFRVAEEELLLPDEQHDDYRWLTPDALLASNDVHANSRAYFLAEKRAGVPGL.

Substrate contacts are provided by residues 2–3 (FL), F8, and R36. Residues 13-153 (RSTPLVSLDF…SRAYFLAEKR (141 aa)) enclose the Nudix hydrolase domain. Mg(2+)-binding residues include G49, E69, and Q122. The Nudix box motif lies at 50-71 (GRVQKDETLEAAFERLTMAELG).

The protein belongs to the Nudix hydrolase family. As to quaternary structure, homodimer. Mg(2+) is required as a cofactor.

The enzyme catalyses GDP-alpha-D-mannose + H2O = D-mannose + GDP + H(+). In terms of biological role, hydrolyzes GDP-mannose. This chain is GDP-mannose mannosyl hydrolase, found in Escherichia coli O157:H7.